A 194-amino-acid chain; its full sequence is Imidazoleglycerol-phosphate dehydratase (194 aa).

This sequence belongs to the imidazoleglycerol-phosphate dehydratase family.

The protein localises to the cytoplasm. It catalyses the reaction D-erythro-1-(imidazol-4-yl)glycerol 3-phosphate = 3-(imidazol-4-yl)-2-oxopropyl phosphate + H2O. It functions in the pathway amino-acid biosynthesis; L-histidine biosynthesis; L-histidine from 5-phospho-alpha-D-ribose 1-diphosphate: step 6/9. The chain is Imidazoleglycerol-phosphate dehydratase from Rubrobacter xylanophilus (strain DSM 9941 / JCM 11954 / NBRC 16129 / PRD-1).